We begin with the raw amino-acid sequence, 594 residues long: DNA polymerase epsilon subunit B (594 aa).

It belongs to the DNA polymerase epsilon subunit B family. As to quaternary structure, heterotetramer. Consists of four subunits: pol2, dpb2, dpb3 and dpb4. Interacts with dpb3.

Its subcellular location is the nucleus. Its function is as follows. As accessory component of the DNA polymerase epsilon (DNA polymerase II) participates in chromosomal DNA replication. The sequence is that of DNA polymerase epsilon subunit B (dpb2) from Schizosaccharomyces pombe (strain 972 / ATCC 24843) (Fission yeast).